Consider the following 413-residue polypeptide: uncharacterized protein (413 aa).

One can recognise a Response regulatory domain in the interval 2-129 (RILIVDDENT…KTTWKLRLME (128 aa)). Position 54 is a 4-aspartylphosphate (Asp-54).

This is an uncharacterized protein from Sinorhizobium fredii (strain NBRC 101917 / NGR234).